The primary structure comprises 554 residues: 3-(3-hydroxy-phenyl)propionate/3-hydroxycinnamic acid hydroxylase (554 aa).

Residues 17 to 46 and 285 to 295 each bind FAD; these read QVAIAGAGPVGLMMANYLGQMGIDVLVVEK and FRIDRVLLAGD.

It belongs to the PheA/TfdB FAD monooxygenase family. FAD serves as cofactor.

The catalysed reaction is 3-(3-hydroxyphenyl)propanoate + NADH + O2 + H(+) = 3-(2,3-dihydroxyphenyl)propanoate + NAD(+) + H2O. The enzyme catalyses (2E)-3-(3-hydroxyphenyl)prop-2-enoate + NADH + O2 + H(+) = (2E)-3-(2,3-dihydroxyphenyl)prop-2-enoate + NAD(+) + H2O. It participates in aromatic compound metabolism; 3-phenylpropanoate degradation. Catalyzes the insertion of one atom of molecular oxygen into position 2 of the phenyl ring of 3-(3-hydroxyphenyl)propionate (3-HPP) and hydroxycinnamic acid (3HCI). In Escherichia coli (strain K12 / DH10B), this protein is 3-(3-hydroxy-phenyl)propionate/3-hydroxycinnamic acid hydroxylase.